The primary structure comprises 291 residues: MSCQPFTSTDTFIPLNSESSATLPLIMHPSAAECLPVSNHATNVMSTATGLHYSVPFCHYGNQSSTYGVMAGSLTPCLYKFPDHTLSHGFPPMHQPLLSEDPTAADFKQELRRKSKLVEEPIDMDSPEIRELEKFANEFKVRRIKLGYTQTNVGEALAAVHGSEFSQTTICRFENLQLSFKNACKLKAILSKWLEEAEQVGALYNEKVGANERKRKRRTTISIAAKDALERHFGEQNKPSSQEILRMAEELNLEKEVVRVWFCNRRQREKRVKTSLNQSLFTISKEHLECR.

A 9aaTAD motif is present at residues 5–13 (PFTSTDTFI). Residues 124–198 (MDSPEIRELE…ILSKWLEEAE (75 aa)) enclose the POU-specific domain. Residues 214 to 273 (KRKRRTTISIAAKDALERHFGEQNKPSSQEILRMAEELNLEKEVVRVWFCNRRQREKRVK) constitute a DNA-binding region (homeobox).

Belongs to the POU transcription factor family. Class-1 subfamily. In terms of assembly, interacts with PITX1. Interacts with LHX3. Interacts with ELK1.

It localises to the nucleus. Functionally, transcription factor involved in the specification of the lactotrope, somatotrope, and thyrotrope phenotypes in the developing anterior pituitary. Activates growth hormone and prolactin genes. Specifically binds to the consensus sequence 5'-TAAAT-3'. This Bos taurus (Bovine) protein is Pituitary-specific positive transcription factor 1 (POU1F1).